The sequence spans 324 residues: Lactonase drp35 (324 aa).

Ca(2+) contacts are provided by Glu-47, Ser-109, Gly-111, Asp-129, Thr-132, Tyr-134, Asp-137, Asn-184, Asp-235, and Ser-236. Asp-235 (proton donor) is an active-site residue.

Belongs to the SMP-30/CGR1 family. Ca(2+) serves as cofactor.

The protein localises to the cytoplasm. Exhibits lactonase activity. Acts in cells with perturbed membrane integrity and is possibly related to the membrane homeostasis. This is Lactonase drp35 (drp35) from Staphylococcus aureus (strain bovine RF122 / ET3-1).